We begin with the raw amino-acid sequence, 199 residues long: dITP/XTP pyrophosphatase (199 aa).

Residue 8–13 coordinates substrate; sequence SGNAGK. The active-site Proton acceptor is the aspartate 69. Aspartate 69 contacts Mg(2+). Substrate is bound by residues serine 70, 154 to 157, lysine 177, and 182 to 183; these read FGYN and HR.

The protein belongs to the HAM1 NTPase family. Homodimer. Mg(2+) serves as cofactor.

It carries out the reaction XTP + H2O = XMP + diphosphate + H(+). It catalyses the reaction dITP + H2O = dIMP + diphosphate + H(+). The enzyme catalyses ITP + H2O = IMP + diphosphate + H(+). Its function is as follows. Pyrophosphatase that catalyzes the hydrolysis of nucleoside triphosphates to their monophosphate derivatives, with a high preference for the non-canonical purine nucleotides XTP (xanthosine triphosphate), dITP (deoxyinosine triphosphate) and ITP. Seems to function as a house-cleaning enzyme that removes non-canonical purine nucleotides from the nucleotide pool, thus preventing their incorporation into DNA/RNA and avoiding chromosomal lesions. This chain is dITP/XTP pyrophosphatase, found in Xanthomonas oryzae pv. oryzae (strain KACC10331 / KXO85).